We begin with the raw amino-acid sequence, 323 residues long: Viral cathepsin (323 aa).

A signal peptide spans 1–18 (MSKFLLYWFVYGVVCSAA). A propeptide spans 19 to 112 (YDILKAPNYF…VVLDRPPGKG (94 aa)) (activation peptide). 3 cysteine pairs are disulfide-bonded: cysteine 133–cysteine 174, cysteine 167–cysteine 207, and cysteine 262–cysteine 310. Cysteine 136 is a catalytic residue. Asparagine 158 carries an N-linked (GlcNAc...) asparagine; by host glycan. Catalysis depends on residues histidine 269 and asparagine 289.

It belongs to the peptidase C1 family. Synthesized as an inactive proenzyme and activated by proteolytic removal of the inhibitory propeptide.

It carries out the reaction Endopeptidase of broad specificity, hydrolyzing substrates of both cathepsin L and cathepsin B.. In terms of biological role, cysteine protease that plays an essential role in host liquefaction to facilitate horizontal transmission of the virus. May participate in the degradation of foreign protein expressed by the baculovirus system. The chain is Viral cathepsin (VCATH) from Lepidoptera (butterflies and moths).